Reading from the N-terminus, the 733-residue chain is Sulfate transporter (733 aa).

A compositionally biased stretch (basic and acidic residues) spans 1 to 18 (MSLKNEEQNDLSPKDSVK). A disordered region spans residues 1–37 (MSLKNEEQNDLSPKDSVKGNDQYRAPSGIHLEREEES). 2 positions are modified to phosphoserine: Ser12 and Ser16. A run of 2 helical transmembrane segments spans residues 113 to 133 (VMSG…YSLL) and 138 to 158 (PIYG…LGTS). An N-linked (GlcNAc...) asparagine glycan is attached at Asn194. Transmembrane regions (helical) follow at residues 214–234 (IIVG…MGFF), 237–257 (GFVS…GASF), 379–399 (IDAI…SEMF), 415–435 (AIGF…SAAL), 453–473 (VMTA…FFSL), and 519–539 (LIST…CVIL). Positions 563-714 (AYKNLQAKSG…SVYEAMTFAE (152 aa)) constitute an STAS domain.

Belongs to the SLC26A/SulP transporter (TC 2.A.53) family. N-glycosylated.

It localises to the cell membrane. The protein resides in the apical cell membrane. It carries out the reaction oxalate(in) + sulfate(out) = oxalate(out) + sulfate(in). The catalysed reaction is sulfate(out) + 2 chloride(in) = sulfate(in) + 2 chloride(out). The enzyme catalyses oxalate(out) + 2 chloride(in) = oxalate(in) + 2 chloride(out). It catalyses the reaction bromide(in) + chloride(out) = bromide(out) + chloride(in). It carries out the reaction nitrate(in) + chloride(out) = nitrate(out) + chloride(in). The catalysed reaction is iodide(in) + chloride(out) = iodide(out) + chloride(in). Sulfate transporter which mediates sulfate uptake into chondrocytes in order to maintain adequate sulfation of proteoglycans which is needed for cartilage development. Mediates electroneutral anion exchange of sulfate ions for oxalate ions, sulfate and oxalate ions for chloride and/or hydroxyl ions and chloride ions for bromide, iodide and nitrate ions. The coupling of sulfate transport to both hydroxyl and chloride ions likely serves to ensure transport at both acidic pH when most sulfate uptake is mediated by sulfate-hydroxide exchange and alkaline pH when most sulfate uptake is mediated by sulfate-chloride exchange. Essential for chondrocyte proliferation, differentiation and cell size expansion. This Bubalus bubalis (Domestic water buffalo) protein is Sulfate transporter (SLC26A2).